Here is a 331-residue protein sequence, read N- to C-terminus: Dioxygenase swnH2 (331 aa).

A compositionally biased stretch (polar residues) spans 1–11 (MINSDAQSAQK). The interval 1-31 (MINSDAQSAQKQVEVEKPDEKYSAPRLLPPI) is disordered. Over residues 13–23 (VEVEKPDEKYS) the composition is skewed to basic and acidic residues. Fe cation-binding residues include His173, Asp175, and His250.

Belongs to the PhyH family. In terms of assembly, homodimer. Fe cation is required as a cofactor.

It participates in mycotoxin biosynthesis. Its function is as follows. Dioxygenase; part of the gene cluster that mediates the biosynthesis of swainsonine (SW), a cytotoxic fungal alkaloid and a potential cancer therapy drug. Swainsonine production occurs via a multibranched pathway and is dispensable for fungal colonization of plants and infection of insect hosts. The first step of swainsonine biosynthesis is the production of the precursor pipecolic acid (PA) via conversion of L-lysine (Lys) to 1-piperideine-6-carboxylate (P6C) by the aminotransferase swnA, the latter being further reduced to PA by the reductase swnR. PA can be converted from lysine by both the SW biosynthetic cluster and the unclustered genes such as lysine cyclodeaminase. The PKS-NRPS hybrid synthetase swnK uptakes and condensates PA and malonyl-CoA with and without skipping of the ketoreductase (KR) domain in order to produce 3 intermediates, 1-oxoindolizidine, (1S)-1-hydroxyindolizin, and (1R)-1-hydroxyindolizine; with the transisomer (1S)-1-hydroxyindolizin being predominant. The terminal thioester reductase (TE) domain of swnK is involved in reduction of the thioester bond to release the intermediate aldehydes. The oxidoreductase swnN could contribute to the reduction of 1-oxoindolizidine to (1S)-1-hydroxyindolizin and (1R)-1-hydroxyindolizine, contributing to the major route of SW production. The dioxygenase swnH2 would be responsible for the oxidization of (1R)-1-hydroxyindolizine into (1R,2S)-1,2-dihydroxyindolizine and of (1S)-1-hydroxyindolizin to yield both (1R,2S)-1,2-dihydroxyindolizine and (1S,2S)-1,2-dihydroxyindolizine. The dioxygenase swnH1 then performs the conversion of the 1,2-dihydroxyindolizine epimers to SW. The protein is Dioxygenase swnH2 of Metarhizium robertsii (strain ARSEF 23 / ATCC MYA-3075) (Metarhizium anisopliae (strain ARSEF 23)).